Here is a 181-residue protein sequence, read N- to C-terminus: Protein Syd (181 aa).

The protein belongs to the Syd family.

Its subcellular location is the cell inner membrane. In terms of biological role, interacts with the SecY protein in vivo. May bind preferentially to an uncomplexed state of SecY, thus functioning either as a chelating agent for excess SecY in the cell or as a regulatory factor that negatively controls the translocase function. This chain is Protein Syd, found in Shigella dysenteriae serotype 1 (strain Sd197).